The sequence spans 394 residues: Metal tolerance protein 11 (394 aa).

Topologically, residues 1 to 103 (MVEPASPDSD…EQDNLAKSET (103 aa)) are cytoplasmic. Residues 104 to 124 (LAIRISNIANMLLFAAKVYAS) form a helical membrane-spanning segment. The Vacuolar segment spans residues 125-130 (VTSGSL). The helical transmembrane segment at 131–151 (AIIASTLDSLLDLLSGFILWF) threads the bilayer. At 152 to 172 (TAFSMQTPNPYQYPIGKKRMQ) the chain is on the cytoplasmic side. A helical membrane pass occupies residues 173-193 (PLGILVFASVMATLGLQIILE). Residues 194-212 (SLRTMLSSHKEFNLTKEQE) lie on the Vacuolar side of the membrane. Residues 213-233 (SWVVGIMLSVTLVKLLLVLYC) form a helical membrane-spanning segment. Residues 234–251 (RSFTNEIVKAYAQDHFFD) are Cytoplasmic-facing. The chain crosses the membrane as a helical span at residues 252–272 (VITNIIGLIAVILANYIDYWI). Aspartate 273 is a topological domain (vacuolar). A helical membrane pass occupies residues 274 to 294 (PVGAIILALYTIRTWSMTVLE). Over 295–394 (NVNSLVGKSA…HKPEHARSHC (100 aa)) the chain is Cytoplasmic.

This sequence belongs to the cation diffusion facilitator (CDF) transporter (TC 2.A.4) family. SLC30A subfamily. In terms of tissue distribution, widely expressed.

It is found in the prevacuolar compartment membrane. Its subcellular location is the golgi apparatus membrane. Cation/proton antiporter involved in endogenous manganese tolerance probably through vesicular trafficking and exocytosis. The polypeptide is Metal tolerance protein 11 (MTP11) (Arabidopsis thaliana (Mouse-ear cress)).